A 195-amino-acid chain; its full sequence is MNIPNLITVLRVLLIPIFILLFYLPYNWSYMAASSVFAFAAATDWLDGYLARRLEQSTPFGAFLDPVADKLMVAVALVLLVQEHGNLWLTLPAAVIIGREIVVSALREWMAELGRTRPGGRCPTWANRKTAAQMLALVILLANPPAFTFWVLLGYAFLLIAGGLTLWSMLQYLRAAWPHLKTDGRKEIKLFESRG.

A run of 4 helical transmembrane segments spans residues Ile-7–Leu-24, Phe-60–Val-81, Met-134–Trp-150, and Phe-157–Leu-173.

This sequence belongs to the CDP-alcohol phosphatidyltransferase class-I family.

Its subcellular location is the cell membrane. It catalyses the reaction a CDP-1,2-diacyl-sn-glycerol + sn-glycerol 3-phosphate = a 1,2-diacyl-sn-glycero-3-phospho-(1'-sn-glycero-3'-phosphate) + CMP + H(+). It functions in the pathway phospholipid metabolism; phosphatidylglycerol biosynthesis; phosphatidylglycerol from CDP-diacylglycerol: step 1/2. In terms of biological role, this protein catalyzes the committed step to the synthesis of the acidic phospholipids. This Pseudomonas fluorescens protein is CDP-diacylglycerol--glycerol-3-phosphate 3-phosphatidyltransferase (pgsA).